The chain runs to 353 residues: Putative transport protein aq_740 (353 aa).

Helical transmembrane passes span 4-24, 28-48, 60-80, 156-176, 209-229, 240-260, 268-288, and 309-329; these read LSLF…LYLL, FNPI…YGFI, FLVI…FAVI, VYTA…LFFI, VLAV…MGFI, LIWA…AAFV, LFTT…TFLI, and VALF…GVFL.

The protein belongs to the autoinducer-2 exporter (AI-2E) (TC 2.A.86) family.

It localises to the cell membrane. This chain is Putative transport protein aq_740, found in Aquifex aeolicus (strain VF5).